Reading from the N-terminus, the 1067-residue chain is Sal-like protein 4 (1067 aa).

The segment at 1 to 62 is disordered; sequence MSRRKQAKPQ…SEDSIPVKRP (62 aa). Positions 15 to 42 are enriched in low complexity; that stretch reads EEGQGEQPQQLPSPDLAEALAAEEPGAP. Phosphoserine is present on Ser-53. Residues 68–90 form a C2H2-type 1; atypical zinc finger; sequence HICNKCCAEFFSLSEFMEHKKSC. A disordered region spans residues 115–140; that stretch reads ALSHQLGSPSNKDSLQENGSSSGDLK. Positions 119 to 137 are enriched in polar residues; the sequence is QLGSPSNKDSLQENGSSSG. Lys-151 participates in a covalent cross-link: Glycyl lysine isopeptide (Lys-Gly) (interchain with G-Cter in SUMO1); alternate. Residue Lys-151 forms a Glycyl lysine isopeptide (Lys-Gly) (interchain with G-Cter in SUMO2); alternate linkage. Residues Lys-170, Lys-185, and Lys-291 each participate in a glycyl lysine isopeptide (Lys-Gly) (interchain with G-Cter in SUMO2) cross-link. Ser-308 is subject to Phosphoserine. Residue Lys-317 forms a Glycyl lysine isopeptide (Lys-Gly) (interchain with G-Cter in SUMO1); alternate linkage. Lys-317 participates in a covalent cross-link: Glycyl lysine isopeptide (Lys-Gly) (interchain with G-Cter in SUMO2); alternate. A Glycyl lysine isopeptide (Lys-Gly) (interchain with G-Cter in SUMO2) cross-link involves residue Lys-377. Residue Lys-379 forms a Glycyl lysine isopeptide (Lys-Gly) (interchain with G-Cter in SUMO1); alternate linkage. A Glycyl lysine isopeptide (Lys-Gly) (interchain with G-Cter in SUMO2); alternate cross-link involves residue Lys-379. 2 consecutive C2H2-type zinc fingers follow at residues 387-409 and 415-437; these read HKCRYCPKVFGTDSSLQIHLRSH and YVCPICGHRFTTKGNLKVHLQRH. Lys-441 is covalently cross-linked (Glycyl lysine isopeptide (Lys-Gly) (interchain with G-Cter in SUMO2)). A disordered region spans residues 471 to 521; sequence DESSLSVDAEPVPVTGTPSLGLPQKLTSGPNSRDLMGGSLPNDMQPGPSPE. Lys-557 is covalently cross-linked (Glycyl lysine isopeptide (Lys-Gly) (interchain with G-Cter in SUMO2)). 2 consecutive C2H2-type zinc fingers follow at residues 573–595 and 601–623; these read NECLICHRVLSCQSSLKMHYRTH and FQCKICGRAFSTKGNLKTHLGVH. Residues Lys-604 and Lys-630 each participate in a glycyl lysine isopeptide (Lys-Gly) (interchain with G-Cter in SUMO2) cross-link. The segment at 633–655 adopts a C2H2-type 6 zinc-finger fold; the sequence is HSCPICQKKFTNAVMLQQHIRMH. Disordered stretches follow at residues 682-716 and 752-835; these read ENGSASGVCQDDAAEGMEAEEVCSQDVPSGPSTVS and RQSS…SLPP. Residues 693–704 are compositionally biased toward acidic residues; the sequence is DAAEGMEAEEVC. Composition is skewed to polar residues over residues 707–716 and 752–761; these read DVPSGPSTVS and RQSSRENSSL. 2 positions are modified to phosphoserine: Ser-785 and Ser-798. A compositionally biased stretch (polar residues) spans 798–809; it reads SPANSQAGSVKS. Over residues 810–829 the composition is skewed to basic and acidic residues; that stretch reads RSPEGHKAEGVESCRVDTEG. Residue Lys-846 forms a Glycyl lysine isopeptide (Lys-Gly) (interchain with G-Cter in SUMO1); alternate linkage. Lys-846 is covalently cross-linked (Glycyl lysine isopeptide (Lys-Gly) (interchain with G-Cter in SUMO2); alternate). The segment at 880 to 902 adopts a C2H2-type 7 zinc-finger fold; that stretch reads HCCTRCGKNFSSASALQIHERTH. Residue Lys-906 forms a Glycyl lysine isopeptide (Lys-Gly) (interchain with G-Cter in SUMO2) linkage. The C2H2-type 8 zinc-finger motif lies at 908–930; the sequence is FVCNICGRAFTTKGNLKVHYMTH. Residues Lys-942 and Lys-957 each participate in a glycyl lysine isopeptide (Lys-Gly) (interchain with G-Cter in SUMO2) cross-link. At Ser-1029 the chain carries Phosphoserine.

The protein belongs to the sal C2H2-type zinc-finger protein family. In terms of assembly, interacts with POU5F1/OCT4. Interacts with NANOG. Interacts with BEND3. Interacts with NSD2 (via PHD-type zinc fingers 1, 2 and 3). Interacts with NRBP1. Sumoylation with both SUMO1 and SUMO2 regulates the stability, subcellular localization, transcriptional activity, and may reduce interaction with POU5F1/OCT4.

It is found in the cytoplasm. It localises to the nucleus. Its function is as follows. Transcription factor with a key role in the maintenance and self-renewal of embryonic and hematopoietic stem cells. The protein is Sal-like protein 4 (Sall4) of Mus musculus (Mouse).